Here is a 223-residue protein sequence, read N- to C-terminus: MOB-like protein phocein (223 aa).

The Zn(2+) site is built by cysteine 92, cysteine 97, cysteine 110, histidine 113, cysteine 119, histidine 127, histidine 169, and histidine 174.

The protein belongs to the MOB1/phocein family. In terms of assembly, part of the core of STRIPAK complexes composed of PP2A catalytic and scaffolding subunits, the striatins (PP2A regulatory subunits), the striatin-associated proteins MOB4, STRIP1 and STRIP2, PDCD10 and members of the STE20 kinases, such as STK24 and STK26.

It localises to the cytoplasm. The protein localises to the membrane. It is found in the golgi apparatus. Its subcellular location is the golgi stack membrane. In terms of biological role, part of the striatin-interacting phosphatase and kinase (STRIPAK) complexes. STRIPAK complexes have critical roles in protein (de)phosphorylation and are regulators of multiple signaling pathways including Hippo, MAPK, nuclear receptor and cytoskeleton remodeling. Different types of STRIPAK complexes are involved in a variety of biological processes such as cell growth, differentiation, apoptosis, metabolism and immune regulation. The polypeptide is MOB-like protein phocein (MOB4) (Gallus gallus (Chicken)).